The following is a 241-amino-acid chain: 1-(5-phosphoribosyl)-5-[(5-phosphoribosylamino)methylideneamino] imidazole-4-carboxamide isomerase (241 aa).

Catalysis depends on Asp10, which acts as the Proton acceptor. Catalysis depends on Asp131, which acts as the Proton donor.

Belongs to the HisA/HisF family.

The protein resides in the cytoplasm. The enzyme catalyses 1-(5-phospho-beta-D-ribosyl)-5-[(5-phospho-beta-D-ribosylamino)methylideneamino]imidazole-4-carboxamide = 5-[(5-phospho-1-deoxy-D-ribulos-1-ylimino)methylamino]-1-(5-phospho-beta-D-ribosyl)imidazole-4-carboxamide. Its pathway is amino-acid biosynthesis; L-histidine biosynthesis; L-histidine from 5-phospho-alpha-D-ribose 1-diphosphate: step 4/9. In Bifidobacterium adolescentis (strain ATCC 15703 / DSM 20083 / NCTC 11814 / E194a), this protein is 1-(5-phosphoribosyl)-5-[(5-phosphoribosylamino)methylideneamino] imidazole-4-carboxamide isomerase.